The sequence spans 208 residues: Large ribosomal subunit protein uL4 (208 aa).

The interval 46 to 97 (QGTHKTKTRAEVRGGGKKPYRQKGTGNARQGSSRSPIMVGGGTIFGPQPRSY) is disordered. Over residues 69–80 (GTGNARQGSSRS) the composition is skewed to polar residues.

This sequence belongs to the universal ribosomal protein uL4 family. In terms of assembly, part of the 50S ribosomal subunit.

Its function is as follows. One of the primary rRNA binding proteins, this protein initially binds near the 5'-end of the 23S rRNA. It is important during the early stages of 50S assembly. It makes multiple contacts with different domains of the 23S rRNA in the assembled 50S subunit and ribosome. In terms of biological role, forms part of the polypeptide exit tunnel. The polypeptide is Large ribosomal subunit protein uL4 (Chlorobaculum parvum (strain DSM 263 / NCIMB 8327) (Chlorobium vibrioforme subsp. thiosulfatophilum)).